A 772-amino-acid polypeptide reads, in one-letter code: UDP-N-acetylmuramoyl-L-alanyl-D-glutamate--2,6-diaminopimelate ligase MurE homolog, chloroplastic (772 aa).

The transit peptide at 1-40 directs the protein to the chloroplast; the sequence is MAFTFLSPHPVFLSLTGTTSSFSYKPVLLPFSRNSRTLTV. Disordered stretches follow at residues 42 to 87 and 141 to 168; these read AGPA…KLEE and LLKP…DVTD. Acidic residues-rich tracts occupy residues 54–63 and 158–168; these read ADDDPPEAPE and EGNEEEGDVTD. Ser-194 carries the post-translational modification Phosphoserine.

Belongs to the MurCDEF family. MurE subfamily. As to quaternary structure, component of the plastid-encoded plastid RNA polymerase (PEP) complex. Expressed in leaves and flowers.

The protein localises to the plastid. The protein resides in the chloroplast. In terms of biological role, involved in chloroplast biogenesis. Required for thylakoid membrane development. Seems to be required for plastid-encoded plastid RNA polymerase (PEP)-dependent gene expression. The protein is UDP-N-acetylmuramoyl-L-alanyl-D-glutamate--2,6-diaminopimelate ligase MurE homolog, chloroplastic of Arabidopsis thaliana (Mouse-ear cress).